A 145-amino-acid polypeptide reads, in one-letter code: D-aminoacyl-tRNA deacylase (145 aa).

A Gly-cisPro motif, important for rejection of L-amino acids motif is present at residues 137–138; sequence GP.

Belongs to the DTD family. Homodimer.

Its subcellular location is the cytoplasm. It catalyses the reaction glycyl-tRNA(Ala) + H2O = tRNA(Ala) + glycine + H(+). The catalysed reaction is a D-aminoacyl-tRNA + H2O = a tRNA + a D-alpha-amino acid + H(+). An aminoacyl-tRNA editing enzyme that deacylates mischarged D-aminoacyl-tRNAs. Also deacylates mischarged glycyl-tRNA(Ala), protecting cells against glycine mischarging by AlaRS. Acts via tRNA-based rather than protein-based catalysis; rejects L-amino acids rather than detecting D-amino acids in the active site. By recycling D-aminoacyl-tRNA to D-amino acids and free tRNA molecules, this enzyme counteracts the toxicity associated with the formation of D-aminoacyl-tRNA entities in vivo and helps enforce protein L-homochirality. The sequence is that of D-aminoacyl-tRNA deacylase from Yersinia pestis bv. Antiqua (strain Antiqua).